The primary structure comprises 335 residues: Protein STRICTOSIDINE SYNTHASE-LIKE 12 (335 aa).

Residues 1-22 (MTSFCSMISLLLLLSLSSAVFS) form the signal peptide. Residue N80 is glycosylated (N-linked (GlcNAc...) asparagine).

It belongs to the strictosidine synthase family.

The protein resides in the vacuole. It carries out the reaction 3alpha(S)-strictosidine + H2O = secologanin + tryptamine. Its pathway is alkaloid biosynthesis; 3alpha(S)-strictosidine biosynthesis; 3alpha(S)-strictosidine from secologanin and tryptamine: step 1/1. Its function is as follows. Catalyzes the stereospecific condensation of tryptamine with secologanin to form strictosidine, the key intermediate of indole alkaloid biosynthesis. This is Protein STRICTOSIDINE SYNTHASE-LIKE 12 from Arabidopsis thaliana (Mouse-ear cress).